The chain runs to 313 residues: Acetylglutamate kinase (313 aa).

Residues 84 to 85, Arg-106, and Asn-210 contribute to the substrate site; that span reads GG.

Belongs to the acetylglutamate kinase family. ArgB subfamily.

It localises to the cytoplasm. The catalysed reaction is N-acetyl-L-glutamate + ATP = N-acetyl-L-glutamyl 5-phosphate + ADP. Its pathway is amino-acid biosynthesis; L-arginine biosynthesis; N(2)-acetyl-L-ornithine from L-glutamate: step 2/4. Functionally, catalyzes the ATP-dependent phosphorylation of N-acetyl-L-glutamate. In Gluconacetobacter diazotrophicus (strain ATCC 49037 / DSM 5601 / CCUG 37298 / CIP 103539 / LMG 7603 / PAl5), this protein is Acetylglutamate kinase.